The following is a 327-amino-acid chain: Plastid lipid-associated protein 1, chloroplastic (327 aa).

A chloroplast-targeting transit peptide spans 1–84; it reads MATTVPLFSQ…WGPEIGLNSS (84 aa). The disordered stretch occupies residues 56 to 78; it reads VNDEWGPDSKGRGGDVDDEWGPE. Positions 85–107 form a coiled coil; it reads VAEKVAEEAIESAEETERLKRVL.

It belongs to the PAP/fibrillin family. As to expression, expressed in anthers, sepals seeds, fruit coats, and leaves. Very low in petals and pistils and not detected in roots.

It is found in the plastid. It localises to the chloroplast. In terms of biological role, may modulate the action of carotenoids. The polypeptide is Plastid lipid-associated protein 1, chloroplastic (PAP1) (Brassica campestris (Field mustard)).